Consider the following 214-residue polypeptide: Adenylate kinase (214 aa).

10-15 (GAGKGT) contacts ATP. An NMP region spans residues 30–59 (STGDMLRAAVKAGTPLGLEAKKVMDAGQLV). Residues T31, R36, 57 to 59 (QLV), 85 to 88 (GFPR), and Q92 each bind AMP. The tract at residues 122–159 (GRRVHPGSGRVYHIVFNQPKVEGKDDVTGEDLAIRPDD) is LID. Residues R123 and 132-133 (VY) each bind ATP. AMP is bound by residues R156 and R167. An ATP-binding site is contributed by Q200.

This sequence belongs to the adenylate kinase family. As to quaternary structure, monomer.

Its subcellular location is the cytoplasm. The catalysed reaction is AMP + ATP = 2 ADP. The protein operates within purine metabolism; AMP biosynthesis via salvage pathway; AMP from ADP: step 1/1. In terms of biological role, catalyzes the reversible transfer of the terminal phosphate group between ATP and AMP. Plays an important role in cellular energy homeostasis and in adenine nucleotide metabolism. This Shewanella woodyi (strain ATCC 51908 / MS32) protein is Adenylate kinase.